Here is a 273-residue protein sequence, read N- to C-terminus: Galactose-binding lectin (273 aa).

A signal peptide spans 1-23 (MKPFCVFLTFFLLLAASSKKVDS). Residues glutamate 144 and aspartate 146 each contribute to the Mn(2+) site. 4 residues coordinate Ca(2+): aspartate 146, tyrosine 148, asparagine 150, and aspartate 155. Aspartate 155 and histidine 160 together coordinate Mn(2+).

This sequence belongs to the leguminous lectin family. Homotetramer.

Functionally, D-galactose specific lectin. In Arachis hypogaea (Peanut), this protein is Galactose-binding lectin.